We begin with the raw amino-acid sequence, 383 residues long: uncharacterized protein (383 aa).

This sequence belongs to the peptidase M20 family.

This is an uncharacterized protein from Staphylococcus epidermidis (strain ATCC 12228 / FDA PCI 1200).